The chain runs to 423 residues: Tegument protein UL43 (423 aa).

Over residues 1–12 (MEKTPAETTAVS) the composition is skewed to polar residues. The segment at 1-46 (MEKTPAETTAVSAGNVPRDSIPCITNVSADTRGRTRPSRPATVPQR) is disordered.

It belongs to the herpesviridae US22 family.

The protein resides in the virion tegument. The polypeptide is Tegument protein UL43 (UL43) (Homo sapiens (Human)).